A 336-amino-acid polypeptide reads, in one-letter code: MGSISRYLLKKAADGLKDEQRLKIEMSDSKSVPECFHFNRERRMPIAEINGEDGFFMFPSQQSLENFENTKKYSNELSPDAIGIPLFQIINCTLPFGKRGHSNTVVGNVPYYKIFKFILRTADEPPPYTVAKIVCSNNGLILYKVPLYDIYKNVSQANVTYSFVGTTSTEPNLLAMAHREGHRDLDTKVNNLNLRWHVTYSPVVTNDHYKLILLADYEVNRLDEDVIRAAKNKMSIDQKDQKVQRFVAAHYTREFETSLFRWVAQEGHLILGEYSTDQGSFGLNNIPPLTEELGCQSLLIHYIEYMKRQRKKIAKEARRQNKRNVANTTNMNMNLM.

It is found in the cytoplasm. Functionally, involved in regulation of invasive growth. The polypeptide is Protein DIA1 (DIA1) (Saccharomyces cerevisiae (strain ATCC 204508 / S288c) (Baker's yeast)).